Reading from the N-terminus, the 102-residue chain is Large ribosomal subunit protein bL21 (102 aa).

The protein belongs to the bacterial ribosomal protein bL21 family. Part of the 50S ribosomal subunit. Contacts protein L20.

Functionally, this protein binds to 23S rRNA in the presence of protein L20. This chain is Large ribosomal subunit protein bL21, found in Geobacter sulfurreducens (strain ATCC 51573 / DSM 12127 / PCA).